The primary structure comprises 320 residues: Ferrochelatase (320 aa).

The Fe cation site is built by His194 and Glu275.

The protein belongs to the ferrochelatase family.

The protein localises to the cytoplasm. It carries out the reaction heme b + 2 H(+) = protoporphyrin IX + Fe(2+). It participates in porphyrin-containing compound metabolism; protoheme biosynthesis; protoheme from protoporphyrin-IX: step 1/1. Its function is as follows. Catalyzes the ferrous insertion into protoporphyrin IX. The protein is Ferrochelatase of Xylella fastidiosa (strain M23).